Here is a 365-residue protein sequence, read N- to C-terminus: Phosphoserine aminotransferase (365 aa).

R40 provides a ligand contact to L-glutamate. Residues 74 to 75, F99, T155, D177, and Q200 each bind pyridoxal 5'-phosphate; that span reads AS. Position 201 is an N6-(pyridoxal phosphate)lysine (K201). Residue 241 to 242 coordinates pyridoxal 5'-phosphate; that stretch reads NT.

This sequence belongs to the class-V pyridoxal-phosphate-dependent aminotransferase family. SerC subfamily. As to quaternary structure, homodimer. Requires pyridoxal 5'-phosphate as cofactor.

Its subcellular location is the cytoplasm. The enzyme catalyses O-phospho-L-serine + 2-oxoglutarate = 3-phosphooxypyruvate + L-glutamate. The catalysed reaction is 4-(phosphooxy)-L-threonine + 2-oxoglutarate = (R)-3-hydroxy-2-oxo-4-phosphooxybutanoate + L-glutamate. It functions in the pathway amino-acid biosynthesis; L-serine biosynthesis; L-serine from 3-phospho-D-glycerate: step 2/3. In terms of biological role, catalyzes the reversible conversion of 3-phosphohydroxypyruvate to phosphoserine and of 3-hydroxy-2-oxo-4-phosphonooxybutanoate to phosphohydroxythreonine. This Lactococcus lactis subsp. cremoris (strain MG1363) protein is Phosphoserine aminotransferase.